The following is a 133-amino-acid chain: Arginine decarboxylase proenzyme (133 aa).

Ser81 (schiff-base intermediate with substrate; via pyruvic acid) is an active-site residue. Ser81 is subject to Pyruvic acid (Ser); by autocatalysis. His86 (proton acceptor; for processing activity) is an active-site residue. The active-site Proton donor; for catalytic activity is Cys101.

It belongs to the prokaryotic AdoMetDC family. Type 1 subfamily. Heterooctamer of four alpha and four beta chains arranged as a tetramer of alpha/beta heterodimers. Pyruvate serves as cofactor. In terms of processing, is synthesized initially as an inactive proenzyme. Formation of the active enzyme involves a self-maturation process in which the active site pyruvoyl group is generated from an internal serine residue via an autocatalytic post-translational modification. Two non-identical subunits are generated from the proenzyme in this reaction, and the pyruvate is formed at the N-terminus of the alpha chain, which is derived from the carboxyl end of the proenzyme. The post-translation cleavage follows an unusual pathway, termed non-hydrolytic serinolysis, in which the side chain hydroxyl group of the serine supplies its oxygen atom to form the C-terminus of the beta chain, while the remainder of the serine residue undergoes an oxidative deamination to produce ammonia and the pyruvoyl group blocking the N-terminus of the alpha chain.

The catalysed reaction is L-arginine + H(+) = agmatine + CO2. It functions in the pathway amine and polyamine biosynthesis; agmatine biosynthesis; agmatine from L-arginine: step 1/1. Functionally, specifically catalyzes the decarboxylation of L-arginine to agmatine. Has no S-adenosylmethionine decarboxylase (AdoMetDC) activity. This is Arginine decarboxylase proenzyme from Pyrobaculum arsenaticum (strain DSM 13514 / JCM 11321 / PZ6).